A 29-amino-acid polypeptide reads, in one-letter code: Glucagon (29 aa).

Belongs to the glucagon family.

Its subcellular location is the secreted. Glucagon plays a key role in glucose metabolism and homeostasis. Regulates blood glucose by increasing gluconeogenesis and decreasing glycolysis. This Callorhinchus milii (Ghost shark) protein is Glucagon (gcg).